The following is a 284-amino-acid chain: Tropomyosin (284 aa).

Residues 1–273 (MDAIKKKMVA…KEKYKAISDE (273 aa)) are a coiled coil. Basic and acidic residues predominate over residues 110–130 (SGKLEEASKAADESERNRKVL). The disordered stretch occupies residues 110 to 134 (SGKLEEASKAADESERNRKVLENLN).

It belongs to the tropomyosin family. In terms of assembly, homodimer.

Tropomyosin, in association with the troponin complex, plays a central role in the calcium dependent regulation of muscle contraction. In Perna viridis (Asian green mussel), this protein is Tropomyosin.